Here is a 180-residue protein sequence, read N- to C-terminus: Putative methyltransferase YrhH (180 aa).

The protein belongs to the methyltransferase superfamily.

The sequence is that of Putative methyltransferase YrhH (yrhH) from Bacillus subtilis (strain 168).